The chain runs to 303 residues: UDP-3-O-acyl-N-acetylglucosamine deacetylase (303 aa).

Residues His-78, His-237, and Asp-241 each contribute to the Zn(2+) site. Catalysis depends on His-264, which acts as the Proton donor.

This sequence belongs to the LpxC family. Requires Zn(2+) as cofactor.

The catalysed reaction is a UDP-3-O-[(3R)-3-hydroxyacyl]-N-acetyl-alpha-D-glucosamine + H2O = a UDP-3-O-[(3R)-3-hydroxyacyl]-alpha-D-glucosamine + acetate. Its pathway is glycolipid biosynthesis; lipid IV(A) biosynthesis; lipid IV(A) from (3R)-3-hydroxytetradecanoyl-[acyl-carrier-protein] and UDP-N-acetyl-alpha-D-glucosamine: step 2/6. In terms of biological role, catalyzes the hydrolysis of UDP-3-O-myristoyl-N-acetylglucosamine to form UDP-3-O-myristoylglucosamine and acetate, the committed step in lipid A biosynthesis. The sequence is that of UDP-3-O-acyl-N-acetylglucosamine deacetylase from Xanthomonas campestris pv. campestris (strain B100).